We begin with the raw amino-acid sequence, 267 residues long: 3-deoxy-manno-octulosonate cytidylyltransferase 2 (267 aa).

Belongs to the KdsB family.

Its subcellular location is the cytoplasm. The enzyme catalyses 3-deoxy-alpha-D-manno-oct-2-ulosonate + CTP = CMP-3-deoxy-beta-D-manno-octulosonate + diphosphate. It participates in nucleotide-sugar biosynthesis; CMP-3-deoxy-D-manno-octulosonate biosynthesis; CMP-3-deoxy-D-manno-octulosonate from 3-deoxy-D-manno-octulosonate and CTP: step 1/1. It functions in the pathway bacterial outer membrane biogenesis; lipopolysaccharide biosynthesis. Functionally, activates KDO (a required 8-carbon sugar) for incorporation into bacterial lipopolysaccharide in Gram-negative bacteria. The polypeptide is 3-deoxy-manno-octulosonate cytidylyltransferase 2 (Burkholderia ambifaria (strain MC40-6)).